The chain runs to 153 residues: Bacteriohemerythrin (153 aa).

Residues His21, His57, Glu61, His76, His80, His115, and Asp120 each coordinate Fe cation.

Belongs to the hemerythrin family. In terms of assembly, monomer.

Functionally, oxygen-binding protein. May be involved in a storage mechanism or for delivery to oxygen-requiring enzymes. The oxygen-binding site contains two iron atoms. This Stenotrophomonas maltophilia (strain R551-3) protein is Bacteriohemerythrin.